Reading from the N-terminus, the 811-residue chain is N-terminal acetyltransferase B complex subunit arm1 (811 aa).

Belongs to the MDM20/NAA25 family. Component of the N-terminal acetyltransferase B (NatB) complex.

It localises to the cytoplasm. In terms of biological role, non-catalytic subunit of the NatB N-terminal acetyltransferase, which catalyzes acetylation of the amino-terminal methionine residues of all proteins beginning with Met-Asp or Met-Glu and of some proteins beginning with Met-Asn or Met-Met. In Schizosaccharomyces pombe (strain 972 / ATCC 24843) (Fission yeast), this protein is N-terminal acetyltransferase B complex subunit arm1 (arm1).